Here is a 510-residue protein sequence, read N- to C-terminus: Chromosomal replication initiator protein DnaA (510 aa).

The tract at residues 1–74 (MHTDLWERGC…EATLSELAGK (74 aa)) is domain I, interacts with DnaA modulators. Positions 74 to 173 (KPVRLELSLL…PTLSPAVSRG (100 aa)) are domain II. Residues 125–168 (ARHDPQSVVPTPGGSANGRAAPRVGEPGGPVGTSTLPVAPTLSP) are disordered. The segment at 174 to 390 (RLNPALTFDT…GALRKVLAYS (217 aa)) is domain III, AAA+ region. Residues G218, G220, K221, and T222 each coordinate ATP. The domain IV, binds dsDNA stretch occupies residues 391 to 510 (RFSHKEISIN…LHVLEQTLKG (120 aa)).

Belongs to the DnaA family. In terms of assembly, oligomerizes as a right-handed, spiral filament on DNA at oriC.

The protein resides in the cytoplasm. In terms of biological role, plays an essential role in the initiation and regulation of chromosomal replication. ATP-DnaA binds to the origin of replication (oriC) to initiate formation of the DNA replication initiation complex once per cell cycle. Binds the DnaA box (a 9 base pair repeat at the origin) and separates the double-stranded (ds)DNA. Forms a right-handed helical filament on oriC DNA; dsDNA binds to the exterior of the filament while single-stranded (ss)DNA is stabiized in the filament's interior. The ATP-DnaA-oriC complex binds and stabilizes one strand of the AT-rich DNA unwinding element (DUE), permitting loading of DNA polymerase. After initiation quickly degrades to an ADP-DnaA complex that is not apt for DNA replication. Binds acidic phospholipids. The chain is Chromosomal replication initiator protein DnaA from Leptothrix cholodnii (strain ATCC 51168 / LMG 8142 / SP-6) (Leptothrix discophora (strain SP-6)).